Here is a 548-residue protein sequence, read N- to C-terminus: Esterase-5A (548 aa).

A signal peptide spans 1 to 21 (MHLVRWLICLIQLWVQLGAAG). C87 and C106 are joined by a disulfide. N-linked (GlcNAc...) asparagine glycans are attached at residues N95 and N116. Residue S210 is the Acyl-ester intermediate of the active site. The cysteines at positions 262 and 274 are disulfide-linked. N-linked (GlcNAc...) asparagine glycosylation occurs at N479. C518 and C539 are disulfide-bonded.

This sequence belongs to the type-B carboxylesterase/lipase family.

It is found in the secreted. It catalyses the reaction a carboxylic ester + H2O = an alcohol + a carboxylate + H(+). The chain is Esterase-5A (Est-5A) from Drosophila pseudoobscura pseudoobscura (Fruit fly).